The following is a 163-amino-acid chain: Aspartate carbamoyltransferase regulatory chain (163 aa).

4 residues coordinate Zn(2+): C113, C118, C143, and C146.

This sequence belongs to the PyrI family. As to quaternary structure, contains catalytic and regulatory chains. Requires Zn(2+) as cofactor.

Its function is as follows. Involved in allosteric regulation of aspartate carbamoyltransferase. The protein is Aspartate carbamoyltransferase regulatory chain of Caldivirga maquilingensis (strain ATCC 700844 / DSM 13496 / JCM 10307 / IC-167).